The following is a 259-amino-acid chain: MLGAIAYTGNKQSLLPELKPHFPKYDRFVDLFCGGLSVSLNVNGPVLANDIQEPIIEMYKRLINVSWDDVLKVIKQYKLSKTSKEEFLKLREDYNKTRDPLLLYVLHFHGFSNMIRINDKGNFTTPFGKRTINKNSEKRFNHFKQNCDKIIFSSLHFKDVKILDGDFVYVDPPYLITVADYNKFWSEEEEKDLLNLLDSLNDRGIKFGLSNVLEHHGKENTLLKEWSKKYNVKHLNKKYVFNIYHSKEKNGTDEVYIFN.

The S-adenosyl-L-methionine site is built by tyrosine 7, lysine 11, aspartate 50, and aspartate 171.

The protein belongs to the N(4)/N(6)-methyltransferase family. Monomer.

The catalysed reaction is a 2'-deoxyadenosine in DNA + S-adenosyl-L-methionine = an N(6)-methyl-2'-deoxyadenosine in DNA + S-adenosyl-L-homocysteine + H(+). In terms of biological role, an alpha subtpe methyltransferase that recognizes the double-stranded sequence 5'-GATC-3' and methylates A-2 on both strands. May prevent degradation of viral DNA by the host restriction-modification antiviral defense system. The protein is DNA adenine methylase of Enterobacteria phage T2 (Bacteriophage T2).